A 179-amino-acid polypeptide reads, in one-letter code: M-phase-specific PLK1-interacting protein (179 aa).

The disordered stretch occupies residues 1–135 (MQRQNFRPPT…RVREKRMSNE (135 aa)). Position 37 is an asymmetric dimethylarginine (R37). Phosphoserine is present on residues S40 and S47. A Phosphothreonine modification is found at T51. R57 is modified (omega-N-methylarginine). 2 positions are modified to asymmetric dimethylarginine: R59 and R68. Residues 60 to 71 (PYGSSHSPRHGG) show a composition bias toward low complexity. S72 is modified (phosphoserine). R77 bears the Asymmetric dimethylarginine mark. Over residues 79 to 109 (GSPSPGGYPGSYSRSPAGSQQQFGYSPGQQQ) the composition is skewed to low complexity. Phosphoserine is present on residues S80, S82, S93, S104, and S115. Residues 110 to 122 (THPQGSPRTSTPF) are compositionally biased toward polar residues. Omega-N-methylarginine is present on R117. At T120 the chain carries Phosphothreonine. 2 positions are modified to phosphoserine: S124 and S133.

In terms of assembly, interacts with PLK1; phosphorylation-dependent. Post-translationally, phosphorylated during mitosis in the cell cycle probably by CDK1. In terms of tissue distribution, expressed at highest levels in liver and kidney; intermediate expression in skeletal muscle, pancreas, heart and placenta; low expression in brain and lung. Expressed in epidermis and hair follicles.

It is found in the nucleus. The protein localises to the cytoplasm. The protein resides in the cytoskeleton. It localises to the microtubule organizing center. Its subcellular location is the centrosome. In terms of biological role, may play a role in maintenance of cell cycle integrity by regulating mitosis or cytokinesis. The protein is M-phase-specific PLK1-interacting protein (MPLKIP) of Homo sapiens (Human).